A 335-amino-acid polypeptide reads, in one-letter code: tRNA N6-adenosine threonylcarbamoyltransferase (335 aa).

Fe cation contacts are provided by His-107 and His-111. Substrate is bound by residues 129 to 133 (LVSGG), Asp-162, Gly-175, and Asn-268. Position 296 (Asp-296) interacts with Fe cation.

This sequence belongs to the KAE1 / TsaD family. Requires Fe(2+) as cofactor.

Its subcellular location is the cytoplasm. The enzyme catalyses L-threonylcarbamoyladenylate + adenosine(37) in tRNA = N(6)-L-threonylcarbamoyladenosine(37) in tRNA + AMP + H(+). Functionally, required for the formation of a threonylcarbamoyl group on adenosine at position 37 (t(6)A37) in tRNAs that read codons beginning with adenine. Is involved in the transfer of the threonylcarbamoyl moiety of threonylcarbamoyl-AMP (TC-AMP) to the N6 group of A37, together with TsaE and TsaB. TsaD likely plays a direct catalytic role in this reaction. This Campylobacter fetus subsp. fetus (strain 82-40) protein is tRNA N6-adenosine threonylcarbamoyltransferase.